We begin with the raw amino-acid sequence, 369 residues long: Cobalt-precorrin-5B C(1)-methyltransferase (369 aa).

Belongs to the CbiD family.

The enzyme catalyses Co-precorrin-5B + S-adenosyl-L-methionine = Co-precorrin-6A + S-adenosyl-L-homocysteine. The protein operates within cofactor biosynthesis; adenosylcobalamin biosynthesis; cob(II)yrinate a,c-diamide from sirohydrochlorin (anaerobic route): step 6/10. Catalyzes the methylation of C-1 in cobalt-precorrin-5B to form cobalt-precorrin-6A. The chain is Cobalt-precorrin-5B C(1)-methyltransferase from Brucella melitensis biotype 1 (strain ATCC 23456 / CCUG 17765 / NCTC 10094 / 16M).